A 185-amino-acid polypeptide reads, in one-letter code: Protein C2-DOMAIN ABA-RELATED 9 (185 aa).

Residues 1–104 (MEDKPLGILR…LEAHQMELDF (104 aa)) enclose the C2 domain. Residues R22, D23, D28, D74, K75, D76, and D82 each coordinate Ca(2+).

This sequence belongs to the plant CAR protein family. As to quaternary structure, binds to PYR/PYL/RCAR abscisic acid intracellular receptors in an ABA-independent manner, both at the plasma membrane and in the nucleus. Interacts with LOT1 in the nuleus; this interaction is repressed by abscisic acid (ABA) and is sensitive to calcium ion Ca(2+), leading to free CAR9 accumulation at the plasma membrane. The cofactor is Ca(2+).

It localises to the cell membrane. The protein localises to the nucleus. Functionally, stimulates the GTPase/ATPase activities of Obg-like ATPases. Mediates the transient calcium-dependent interaction of PYR/PYL/RCAR abscisic acid (ABA) receptors with the plasma membrane and thus regulates ABA sensitivity. This chain is Protein C2-DOMAIN ABA-RELATED 9, found in Arabidopsis thaliana (Mouse-ear cress).